A 425-amino-acid polypeptide reads, in one-letter code: MDLQLPRGTRDILPEEVSKWHFLETEFKNVCENYQYEEIRTPVFEHTELFERGVGDSTDIVSKEMYTFQDKGGRSLTLRPEGTASVVRAFVEHKLYGEVSQPIKMYYNEPMFRYERPQGGRQRQFTQMGIEALGSDDPSIDVEVISLAMEFFRKIGLTNIKLVINSLGDKESRLKHREALVAHFEPHIDEFCAECQVRLHKNPLRILDCKKDHDNPLIQSAPSILDFLNEESVAYFENVKNYLNALEIPFEIDPTMVRGLDYYNHTTFEIMSVEEGFGAKTTLCGGGRYHGLVREFGGPDTPGMGFGIGVERILLALEKADIEIPAKKPLEVYVITAQPEAELKGVTLVNKLRQNGISAEKDYLKRKFKAQLKDANRKNAVYTIILGEEELQTGNYQLKNMETGEQEAVSETTILEKLSNTKGEK.

The protein belongs to the class-II aminoacyl-tRNA synthetase family. In terms of assembly, homodimer.

It localises to the cytoplasm. It catalyses the reaction tRNA(His) + L-histidine + ATP = L-histidyl-tRNA(His) + AMP + diphosphate + H(+). This Listeria monocytogenes serovar 1/2a (strain ATCC BAA-679 / EGD-e) protein is Histidine--tRNA ligase.